A 105-amino-acid chain; its full sequence is U2-lycotoxin-Ls1c (105 aa).

A signal peptide spans 1 to 17 (MIKYVLISALLVVAVYS). The propeptide occupies 18–41 (FTIEDSEDALLEEAEDELDTEEER). 4 disulfides stabilise this stretch: C51-C67, C58-C97, C60-C83, and C69-C81.

This sequence belongs to the neurotoxin 04 (omega-agtx) family. 01 (type I omega-agtx) subfamily. As to expression, expressed by the venom gland.

Its subcellular location is the secreted. In terms of biological role, insecticidal to house crickets. It induces an excitatory slow-onset impact that leads to irreversible spastic paralysis. It also modifies human voltage-gated potassium channel Kv1.5/KCNA5. Most likely, it binds to the voltage-sensing domain of the channel, suggesting it does not block the pore but prevents its opening at physiological membrane potentials. The recombinant peptide binds to the channel in an irreversible manner and slows down the hKv1.5 current activation kinetics. It is not toxic to mice, when intracranially injected (at 0.5 ug/g mouse). This chain is U2-lycotoxin-Ls1c, found in Lycosa singoriensis (Wolf spider).